A 392-amino-acid polypeptide reads, in one-letter code: Tryptophan synthase beta chain (392 aa).

Position 86 is an N6-(pyridoxal phosphate)lysine (Lys86).

It belongs to the TrpB family. Tetramer of two alpha and two beta chains. The cofactor is pyridoxal 5'-phosphate.

The enzyme catalyses (1S,2R)-1-C-(indol-3-yl)glycerol 3-phosphate + L-serine = D-glyceraldehyde 3-phosphate + L-tryptophan + H2O. Its pathway is amino-acid biosynthesis; L-tryptophan biosynthesis; L-tryptophan from chorismate: step 5/5. In terms of biological role, the beta subunit is responsible for the synthesis of L-tryptophan from indole and L-serine. This chain is Tryptophan synthase beta chain (trpB), found in Buchnera aphidicola subsp. Schlechtendalia chinensis.